A 510-amino-acid chain; its full sequence is Lysine-specific demethylase 4D (510 aa).

The region spanning 15–57 is the JmjN domain; the sequence is IMIFRPTKEEFNDFDKYIAYMESQGAHRAGLAKVIPPKEWRAR. A polyADP-ribosyl glutamic acid mark is found at E23 and E24. Position 133 (Y133) interacts with 2-oxoglutarate. Positions 143–309 constitute a JmjC domain; the sequence is DGKTQQWNVG…YGKVASQCSC (167 aa). Positions 189 and 191 each coordinate Fe cation. Residues N199 and K207 each contribute to the 2-oxoglutarate site. Zn(2+)-binding residues include C235 and H241. K242 contributes to the 2-oxoglutarate binding site. Position 277 (H277) interacts with Fe cation. The Zn(2+) site is built by C307 and C309. Residues 397–510 form a disordered region; sequence MCHTSRQAAD…ASEGGLTSDP (114 aa). Positions 461 to 471 are enriched in basic and acidic residues; the sequence is RLPEGRDDRSP.

This sequence belongs to the JHDM3 histone demethylase family. Requires Fe(2+) as cofactor. In terms of processing, ubiquitinated via 'Lys-63'-linked ubiquitin chains. Deubiquitinated by USP14 with the help of TRIM14 leading to stabilization.

The protein localises to the nucleus. It carries out the reaction N(6),N(6),N(6)-trimethyl-L-lysyl(9)-[histone H3] + 2 2-oxoglutarate + 2 O2 = N(6)-methyl-L-lysyl(9)-[histone H3] + 2 formaldehyde + 2 succinate + 2 CO2. In terms of biological role, histone demethylase that specifically demethylates 'Lys-9' of histone H3, thereby playing a central role in histone code. Does not demethylate histone H3 'Lys-4', H3 'Lys-27', H3 'Lys-36' nor H4 'Lys-20'. Demethylates both di- and trimethylated H3 'Lys-9' residue, while it has no activity on monomethylated residues. Demethylation of Lys residue generates formaldehyde and succinate. The protein is Lysine-specific demethylase 4D (Kdm4d) of Rattus norvegicus (Rat).